The sequence spans 710 residues: Polyribonucleotide nucleotidyltransferase (710 aa).

Mg(2+) contacts are provided by Asp-485 and Asp-491. The KH domain maps to 552-611 (PKILTLTINPDKIRDVIGPSGKVINKIIEETGVKIDIEQDGTVYISSLDTAMNQKAKQII). One can recognise an S1 motif domain in the interval 621-689 (GETYHGKVKR…NQGRVNLSRK (69 aa)).

The protein belongs to the polyribonucleotide nucleotidyltransferase family. Mg(2+) is required as a cofactor.

The protein localises to the cytoplasm. It catalyses the reaction RNA(n+1) + phosphate = RNA(n) + a ribonucleoside 5'-diphosphate. Functionally, involved in mRNA degradation. Catalyzes the phosphorolysis of single-stranded polyribonucleotides processively in the 3'- to 5'-direction. In Shouchella clausii (strain KSM-K16) (Alkalihalobacillus clausii), this protein is Polyribonucleotide nucleotidyltransferase.